A 459-amino-acid chain; its full sequence is Cysteine--tRNA ligase (459 aa).

C27 contacts Zn(2+). The short motif at 29–39 (PTVYDDAHLGH) is the 'HIGH' region element. Zn(2+)-binding residues include C202, H231, and E235. Residues 263–267 (KMSKS) carry the 'KMSKS' region motif. K266 lines the ATP pocket.

This sequence belongs to the class-I aminoacyl-tRNA synthetase family. Monomer. Requires Zn(2+) as cofactor.

It localises to the cytoplasm. The catalysed reaction is tRNA(Cys) + L-cysteine + ATP = L-cysteinyl-tRNA(Cys) + AMP + diphosphate. This chain is Cysteine--tRNA ligase, found in Campylobacter fetus subsp. fetus (strain 82-40).